A 1464-amino-acid chain; its full sequence is Glutamate receptor ionotropic, NMDA 2A (1464 aa).

A signal peptide spans 1–22; that stretch reads MGRVGYWTLLVLPALLVWRGPA. At 23 to 556 the chain is on the extracellular side; the sequence is PSAAAEKGPP…SAFLEPFSAS (534 aa). Residue His-44 participates in Zn(2+) binding. An N-linked (GlcNAc...) asparagine glycan is attached at Asn-75. A disulfide bond links Cys-87 and Cys-320. Positions 128, 266, and 282 each coordinate Zn(2+). N-linked (GlcNAc...) asparagine glycosylation is found at Asn-340, Asn-380, Asn-443, and Asn-444. Intrachain disulfides connect Cys-429/Cys-455 and Cys-436/Cys-456. Residues Ser-511, Thr-513, and Arg-518 each contribute to the L-glutamate site. A glycan (N-linked (GlcNAc...) asparagine) is linked at Asn-541. Residues 557-576 form a helical membrane-spanning segment; the sequence is VWVMMFVMLLIVSAIAVFVF. The Cytoplasmic segment spans residues 577–600; it reads EYFSPVGYNRNLAKGKAPHGPSFT. The tract at residues 599–620 is pore-forming; it reads FTIGKAIWLLWGLVFNNSVPVQ. An intramembrane region (discontinuously helical) is located at residues 601 to 615; sequence IGKAIWLLWGLVFNN. Residues 616–625 lie on the Cytoplasmic side of the membrane; it reads SVPVQNPKGT. The helical transmembrane segment at 626 to 646 threads the bilayer; that stretch reads TSKIMVSVWAFFAVIFLASYT. Residues 647-814 are Extracellular-facing; sequence ANLAAFMIQE…NEVMSSQLDI (168 aa). A glycan (N-linked (GlcNAc...) asparagine) is linked at Asn-687. Ser-689, Thr-690, and Asp-731 together coordinate L-glutamate. The cysteines at positions 745 and 800 are disulfide-linked. Residues 815 to 835 traverse the membrane as a helical segment; the sequence is DNMAGVFYMLAAAMALSLITF. The Cytoplasmic segment spans residues 836–1464; that stretch reads IWEHLFYWKL…KKMPSIESDV (629 aa). Residues Ser-882, Ser-890, and Ser-929 each carry the phosphoserine modification. Composition is skewed to polar residues over residues 997–1010 and 1023–1032; these read EVAVSTESKANSRP and QDSLSQNPVS. Residues 997–1083 form a disordered region; that stretch reads EVAVSTESKA…PDNSKNHKTK (87 aa). Phosphoserine is present on Ser-1025. 2 stretches are compositionally biased toward basic and acidic residues: residues 1033-1043 and 1052-1061; these read QRDEATAENRT and LPEEMAHSDI. 2 positions are modified to phosphoserine: Ser-1059 and Ser-1062. Residues 1070–1083 show a composition bias toward basic and acidic residues; the sequence is CHREPDNSKNHKTK. Phosphoserine is present on residues Ser-1198 and Ser-1291. The segment at 1335-1372 is disordered; sequence KLSGKKSSLFPQGLEDSKRSKSLLPDHTSDNPFLHSHR. Residues 1462-1464 carry the PDZ-binding motif; that stretch reads SDV.

It belongs to the glutamate-gated ion channel (TC 1.A.10.1) family. NR2A/GRIN2A subfamily. In terms of assembly, heterotetramer. Forms heterotetrameric channels composed of two GluN1/zeta subunits (GRIN1), and two identical GluN2/epsilon subunits (GRIN2A, GRIN2B, GRIN2C or GRIN2D) or GluN3 subunits (GRIN3A or GRIN3B) (in vitro). Can also form heterotetrameric channels that contain at least two GluN1 subunits and at least two different GluN2 subunits (or a combination of one GluN2 and one GluN3 subunits) (in vitro). In vivo, the subunit composition may depend on the expression levels of the different subunits. Found in a complex with GRIN1, GRIN3A and PPP2CB. Found in a complex with GRIN1 and GRIN3B. Interacts with AIP1. Interacts with HIP1 and NETO1. Interacts with SNX27 (via PDZ domain); the interaction is required for recycling to the plasma membrane when endocytosed and prevent degradation in lysosomes. Interacts with PDZ domains of PATJ and DLG4. Interacts with LRFN2. Interacts with RPH3A and DLG4; this ternary complex regulates NMDA receptor composition at postsynaptic membranes. Interacts with SORCS2. Interacts with ARC; preventing ARC oligomerization. Interacts (via the extreme C-terminus) with FRMPD2 (the second PDZ domain); the interaction is direct and is likely to promote NMDAR-mediated neural signal transmission. GRIN2A binds FRMPD2 with lower affinity than GRIN2B.

It is found in the cell projection. It localises to the dendritic spine. Its subcellular location is the cell membrane. The protein resides in the synapse. The protein localises to the postsynaptic cell membrane. It is found in the cytoplasmic vesicle membrane. The enzyme catalyses Ca(2+)(in) = Ca(2+)(out). The catalysed reaction is Na(+)(in) = Na(+)(out). It carries out the reaction K(+)(in) = K(+)(out). NMDA glutamate receptor activity is inhibited by endogenous Mg(2+) in a voltage-dependent manner. NMDA glutamate receptor activity is inhibited by endogenous Zn(2+). NMDA glutamate receptor activity is inhibited by endogenous protons. Its function is as follows. Component of N-methyl-D-aspartate (NMDA) receptors (NMDARs) that function as heterotetrameric, ligand-gated cation channels with high calcium permeability and voltage-dependent block by Mg(2+). NMDARs participate in synaptic plasticity for learning and memory formation by contributing to the slow phase of excitatory postsynaptic current, long-term synaptic potentiation, and learning. Channel activation requires binding of the neurotransmitter L-glutamate to the GluN2 subunit, glycine or D-serine binding to the GluN1 subunit, plus membrane depolarization to eliminate channel inhibition by Mg(2+). NMDARs mediate simultaneously the potasium efflux and the influx of calcium and sodium. Each GluN2 subunit confers differential attributes to channel properties, including activation, deactivation and desensitization kinetics, pH sensitivity, Ca2(+) permeability, and binding to allosteric modulators. Participates in the synaptic plasticity regulation through activation by the L-glutamate releaseed by BEST1, into the synaptic cleft, upon F2R/PAR-1 activation in astrocyte. The chain is Glutamate receptor ionotropic, NMDA 2A from Homo sapiens (Human).